Consider the following 792-residue polypeptide: Ubiquitin carboxyl-terminal hydrolase 10 (792 aa).

A DHR2-binding module region spans residues 2 to 27; sequence TTQESIKPLVDRILSNPLQFNAAMIS. Disordered stretches follow at residues 64–87 and 103–320; these read AESKQIKENNLIDRPNGKKTNTVP and KDAA…SITP. Over residues 107-129 the composition is skewed to low complexity; that stretch reads DATGAKKSAELSTELSTEPPSSS. The interval 109 to 145 is SIR4-binding module; that stretch reads TGAKKSAELSTELSTEPPSSSSEDDKVGKEEEEEGEI. Basic and acidic residues predominate over residues 144 to 171; that stretch reads EIFHEARDYVEPRKASLKERDNADKGDG. Positions 167-208 are UTP22-binding module; it reads DKGDGEDIGEDIGEDIGEDIGEDIGEDIGENLGSPLATIDDS. The span at 172 to 195 shows a compositional bias: acidic residues; the sequence is EDIGEDIGEDIGEDIGEDIGEDIG. Residues 211 to 220 show a composition bias toward basic and acidic residues; that stretch reads ENEKEKRKEL. Positions 226–241 are enriched in acidic residues; it reads SDDEIEDDEDEDDMDY. A compositionally biased stretch (polar residues) spans 288–297; that stretch reads VNNTKENGNR. The region spanning 362 to 733 is the USP domain; the sequence is RGLLNHGVTC…NAYYLLYTRL (372 aa). Residue C371 is the Nucleophile of the active site. The interval 526 to 563 is disordered; it reads LDPNSDLSSDSINGTSATTSTTTSNAATKPSLSSSSSV. The span at 530–539 shows a compositional bias: polar residues; the sequence is SDLSSDSING. Low complexity predominate over residues 540 to 563; sequence TSATTSTTTSNAATKPSLSSSSSV. H691 serves as the catalytic Proton acceptor. Polar residues predominate over residues 749 to 766; the sequence is TGNVTSKSKQEQAVNEPN. The interval 749–792 is disordered; it reads TGNVTSKSKQEQAVNEPNNRPLKINSKKNNRKKWKKNKKRKFTK. Basic residues predominate over residues 773–792; sequence NSKKNNRKKWKKNKKRKFTK.

Belongs to the peptidase C19 family. As to quaternary structure, interacts with SIR4. Interacts with the proliferating-cell nuclear antigen PCNA/POL30. Interacts with DHR2 and UTP22.

Its subcellular location is the nucleus. The protein localises to the chromosome. The protein resides in the telomere. It localises to the nucleolus. It catalyses the reaction Thiol-dependent hydrolysis of ester, thioester, amide, peptide and isopeptide bonds formed by the C-terminal Gly of ubiquitin (a 76-residue protein attached to proteins as an intracellular targeting signal).. Deubiquitinating enzyme involved in telomere and HM loci silencing, which is the repression of chromatin structure which leads to a stop in the transcription of nearby genes. Targets histone H2B for deubiquitination, thus helping to localize SIR2 to the telomere. At silent chromatin, including telomeres and the rDNA locus, not only maintains low H2B 'Lys-123' ubiquitination (H2BK123Ub), but also low H3 'Lys-4' and 'Lys-79' methylation (H3K4me and H3K79me, respectively). Controls the proliferating-cell nuclear antigen PCNA/POL30 deubiquitination which is crucial for keeping TLS polymerases in check as well as for down-regulating the error-free bypass. Deubiquitinates and stabilizes RPA190, the largest subunit of RNA polymerase I, to achieve optimal levels of ribosomes and cell growth. Also protects nutrient transporters such as GAP1 from ubiquitin-dependent endocytosis. The protein is Ubiquitin carboxyl-terminal hydrolase 10 (UBP10) of Saccharomyces cerevisiae (strain ATCC 204508 / S288c) (Baker's yeast).